Consider the following 602-residue polypeptide: Zinc finger protein 652-B (602 aa).

Residues 60–232 (FQDSKPTNEV…PSDKAKSEEK (173 aa)) form a disordered region. A compositionally biased stretch (basic and acidic residues) spans 65–79 (PTNEVHAVKGERENS). 2 stretches are compositionally biased toward acidic residues: residues 80–108 (GESE…DEDE) and 148–167 (DDEG…DEEN). The span at 222–232 (SPSDKAKSEEK) shows a compositional bias: basic and acidic residues. Residues 235–258 (LTCDKCPRVFNTRWYLEKHMNVTH) form a C2H2-type 1 zinc finger. The C2H2-type 2; degenerate zinc finger occupies 262–284 (QICDKCGKKFVLESELSLHLQTD). C2H2-type zinc fingers lie at residues 289-312 (IQCI…KIVH), 319-341 (FSCE…LVAH), 347-369 (FTCE…SLQH), 375-397 (FRCE…MSIH), 403-425 (FMCQ…MKTH), and 431-453 (FICE…RRTH). A C2H2-type 9; degenerate zinc finger spans residues 459 to 482 (YPCDVCGMRFRFSNMLKAHKEKCF). A disordered region spans residues 543–575 (PFSHLHLHPHSHTHHLAVPPVPHLPPPPALFKS). Basic residues predominate over residues 545-557 (SHLHLHPHSHTHH). The span at 561–571 (PPVPHLPPPPA) shows a compositional bias: pro residues.

This sequence belongs to the krueppel C2H2-type zinc-finger protein family.

The protein resides in the nucleus. In terms of biological role, may be involved in transcriptional regulation. The chain is Zinc finger protein 652-B (znf652-b) from Xenopus laevis (African clawed frog).